The chain runs to 363 residues: Phosphoserine aminotransferase (363 aa).

Arg42 lines the L-glutamate pocket. Pyridoxal 5'-phosphate-binding positions include 76–77 (GR), Trp102, Thr156, Asp175, and Gln198. At Lys199 the chain carries N6-(pyridoxal phosphate)lysine. Residue 240–241 (NT) participates in pyridoxal 5'-phosphate binding.

The protein belongs to the class-V pyridoxal-phosphate-dependent aminotransferase family. SerC subfamily. In terms of assembly, homodimer. It depends on pyridoxal 5'-phosphate as a cofactor.

The protein localises to the cytoplasm. It carries out the reaction O-phospho-L-serine + 2-oxoglutarate = 3-phosphooxypyruvate + L-glutamate. It catalyses the reaction 4-(phosphooxy)-L-threonine + 2-oxoglutarate = (R)-3-hydroxy-2-oxo-4-phosphooxybutanoate + L-glutamate. It participates in amino-acid biosynthesis; L-serine biosynthesis; L-serine from 3-phospho-D-glycerate: step 2/3. Its pathway is cofactor biosynthesis; pyridoxine 5'-phosphate biosynthesis; pyridoxine 5'-phosphate from D-erythrose 4-phosphate: step 3/5. Catalyzes the reversible conversion of 3-phosphohydroxypyruvate to phosphoserine and of 3-hydroxy-2-oxo-4-phosphonooxybutanoate to phosphohydroxythreonine. The sequence is that of Phosphoserine aminotransferase from Shewanella baltica (strain OS155 / ATCC BAA-1091).